The following is a 136-amino-acid chain: Ergosterol biosynthetic protein 28 (136 aa).

The next 4 helical transmembrane spans lie at 18 to 34, 56 to 72, 79 to 95, and 109 to 125; these read VVVS…SFLT, FGIW…YCAY, VYFL…FHFL, and GLLS…WFMA.

Belongs to the ERG28 family. In terms of assembly, heterotetramer of erg25, erg26, erg27 and erg28. Erg28 acts as a scaffold to tether erg27 and other 4,4-demethylation-related enzymes, forming a demethylation enzyme complex, in the endoplasmic reticulum.

It localises to the endoplasmic reticulum membrane. It participates in steroid metabolism; ergosterol biosynthesis. Part of the third module of ergosterol biosynthesis pathway that includes by the late steps of the pathway. Erg28 has a role as a scaffold to help anchor the catalytic components of the C-4 demethylation complex erg25, erg26 and erg27 to the endoplasmic reticulum. The third module or late pathway involves the ergosterol synthesis itself through consecutive reactions that mainly occur in the endoplasmic reticulum (ER) membrane. Firstly, the squalene synthase erg9 catalyzes the condensation of 2 farnesyl pyrophosphate moieties to form squalene, which is the precursor of all steroids. Secondly, squalene is converted into lanosterol by the consecutive action of the squalene epoxidase erg1 and the lanosterol synthase erg7. The lanosterol 14-alpha-demethylase erg11/cyp1 catalyzes C14-demethylation of lanosterol to produce 4,4'-dimethyl cholesta-8,14,24-triene-3-beta-ol. In the next steps, a complex process involving various demethylation, reduction and desaturation reactions catalyzed by the C-14 reductase erg24 and the C-4 demethylation complex erg25-erg26-erg27 leads to the production of zymosterol. Erg28 likely functions in the C-4 demethylation complex reaction by tethering erg26 and Erg27 to the endoplasmic reticulum or to facilitate interaction between these proteins. Then, the sterol 24-C-methyltransferase erg6 catalyzes the methyl transfer from S-adenosyl-methionine to the C-24 of zymosterol to form fecosterol. The C-8 sterol isomerase erg2 catalyzes the reaction which results in unsaturation at C-7 in the B ring of sterols and thus converts fecosterol to episterol. The sterol-C5-desaturases erg31 and erg32 then catalyze the introduction of a C-5 double bond in the B ring to produce 5-dehydroepisterol. The C-22 sterol desaturase erg5 further converts 5-dehydroepisterol into ergosta-5,7,22,24(28)-tetraen-3beta-ol by forming the C-22(23) double bond in the sterol side chain. Finally, ergosta-5,7,22,24(28)-tetraen-3beta-ol is substrate of the C-24(28) sterol reductase erg4 to produce ergosterol. In the genus Schizosaccharomyces, a second route exists between lanosterol and fecosterol, via the methylation of lanosterol to eburicol by erg6, followed by C14-demethylation by erg11/cyp1 and C4-demethylation by the demethylation complex erg25-erg26-erg27. In terms of biological role, extends the chronological lifespan when overexpressed. The chain is Ergosterol biosynthetic protein 28 from Schizosaccharomyces pombe (strain 972 / ATCC 24843) (Fission yeast).